We begin with the raw amino-acid sequence, 72 residues long: Translation initiation factor IF-1 (72 aa).

Positions Met-1 to Lys-72 constitute an S1-like domain.

The protein belongs to the IF-1 family. In terms of assembly, component of the 30S ribosomal translation pre-initiation complex which assembles on the 30S ribosome in the order IF-2 and IF-3, IF-1 and N-formylmethionyl-tRNA(fMet); mRNA recruitment can occur at any time during PIC assembly.

It localises to the cytoplasm. Functionally, one of the essential components for the initiation of protein synthesis. Stabilizes the binding of IF-2 and IF-3 on the 30S subunit to which N-formylmethionyl-tRNA(fMet) subsequently binds. Helps modulate mRNA selection, yielding the 30S pre-initiation complex (PIC). Upon addition of the 50S ribosomal subunit IF-1, IF-2 and IF-3 are released leaving the mature 70S translation initiation complex. The protein is Translation initiation factor IF-1 of Chelativorans sp. (strain BNC1).